The primary structure comprises 905 residues: Protein translocase subunit SecA (905 aa).

Residues glutamine 87, 105–109 (GEGKT), and aspartate 512 contribute to the ATP site. The tract at residues 840 to 905 (AQRQQEAMAQ…HCHGSKARYA (66 aa)) is disordered. Over residues 843 to 852 (QQEAMAQAES) the composition is skewed to low complexity. Residues 853–862 (ENYRTADHQA) are compositionally biased toward basic and acidic residues. Positions 863-874 (EAQQSESLTEEQ) are enriched in polar residues. Zn(2+) is bound by residues cysteine 886, cysteine 888, cysteine 897, and histidine 898. Basic residues predominate over residues 892–905 (KKYKHCHGSKARYA).

This sequence belongs to the SecA family. Monomer and homodimer. Part of the essential Sec protein translocation apparatus which comprises SecA, SecYEG and auxiliary proteins SecDF-YajC and YidC. It depends on Zn(2+) as a cofactor.

The protein resides in the cell inner membrane. The protein localises to the cytoplasm. The catalysed reaction is ATP + H2O + cellular proteinSide 1 = ADP + phosphate + cellular proteinSide 2.. Part of the Sec protein translocase complex. Interacts with the SecYEG preprotein conducting channel. Has a central role in coupling the hydrolysis of ATP to the transfer of proteins into and across the cell membrane, serving both as a receptor for the preprotein-SecB complex and as an ATP-driven molecular motor driving the stepwise translocation of polypeptide chains across the membrane. This Actinobacillus pleuropneumoniae serotype 3 (strain JL03) protein is Protein translocase subunit SecA.